Reading from the N-terminus, the 63-residue chain is Large ribosomal subunit protein bL32c (63 aa).

The disordered stretch occupies residues Arg38–Gly63. Positions Ser53–Gly63 are enriched in polar residues.

Belongs to the bacterial ribosomal protein bL32 family.

Its subcellular location is the plastid. It localises to the chloroplast. This chain is Large ribosomal subunit protein bL32c (rpl32), found in Oryza sativa (Rice).